The chain runs to 359 residues: Dihydroorotate dehydrogenase (quinone) (359 aa).

FMN contacts are provided by residues 61-65 (AGYDK) and Thr-85. Lys-65 contacts substrate. 110 to 114 (NRLGF) contributes to the substrate binding site. The FMN site is built by Asn-139 and Asn-170. Position 170 (Asn-170) interacts with substrate. Ser-173 (nucleophile) is an active-site residue. Asn-175 provides a ligand contact to substrate. 2 residues coordinate FMN: Lys-211 and Ser-239. 240–241 (NT) serves as a coordination point for substrate. Residues Gly-262, Gly-291, and 312–313 (YT) each bind FMN.

Belongs to the dihydroorotate dehydrogenase family. Type 2 subfamily. As to quaternary structure, monomer. FMN serves as cofactor.

The protein resides in the cell membrane. The catalysed reaction is (S)-dihydroorotate + a quinone = orotate + a quinol. Its pathway is pyrimidine metabolism; UMP biosynthesis via de novo pathway; orotate from (S)-dihydroorotate (quinone route): step 1/1. Functionally, catalyzes the conversion of dihydroorotate to orotate with quinone as electron acceptor. The sequence is that of Dihydroorotate dehydrogenase (quinone) from Mesorhizobium japonicum (strain LMG 29417 / CECT 9101 / MAFF 303099) (Mesorhizobium loti (strain MAFF 303099)).